Reading from the N-terminus, the 343-residue chain is Fructose-1,6-bisphosphatase class 1 (343 aa).

Mg(2+)-binding residues include E90, D109, L111, and D112. Substrate is bound by residues 112–115 and N199; that span reads DGSS. Residue E271 participates in Mg(2+) binding.

The protein belongs to the FBPase class 1 family. As to quaternary structure, homotetramer. It depends on Mg(2+) as a cofactor.

It is found in the cytoplasm. It catalyses the reaction beta-D-fructose 1,6-bisphosphate + H2O = beta-D-fructose 6-phosphate + phosphate. It participates in carbohydrate biosynthesis; Calvin cycle. The protein is Fructose-1,6-bisphosphatase class 1 of Rhodopseudomonas palustris (strain HaA2).